Reading from the N-terminus, the 542-residue chain is Chaperonin GroEL 5 (542 aa).

ATP is bound by residues 30 to 33 (TLGP), Lys51, 87 to 91 (DGTTT), Gly415, and Asp496.

This sequence belongs to the chaperonin (HSP60) family. Forms a cylinder of 14 subunits composed of two heptameric rings stacked back-to-back. Interacts with the co-chaperonin GroES.

It is found in the cytoplasm. The catalysed reaction is ATP + H2O + a folded polypeptide = ADP + phosphate + an unfolded polypeptide.. Functionally, together with its co-chaperonin GroES, plays an essential role in assisting protein folding. The GroEL-GroES system forms a nano-cage that allows encapsulation of the non-native substrate proteins and provides a physical environment optimized to promote and accelerate protein folding. In Rhizobium meliloti (strain 1021) (Ensifer meliloti), this protein is Chaperonin GroEL 5.